Reading from the N-terminus, the 211-residue chain is Porin MspA (211 aa).

The first 27 residues, 1–27 (MKAISRVLIAMVAAIAALFTSTGTSHA), serve as a signal peptide directing secretion.

The protein belongs to the mycobacterial porin (TC 1.B.24) family. In terms of assembly, forms very stable octamers. Isolated as a 100 kDa complex that can be reduced to monomers upon boiling in 80% dimethyl sulfoxide for 15 minutes. Structures show a goblet with the wide end on the exterior of the outer membrane and a central channel. It is not known if mixed oligomers of MspA with other Msp subunits form in vivo.

It localises to the cell outer membrane. The protein localises to the secreted. The protein resides in the cell wall. Its function is as follows. The major porin in this organism, forms a water-filled channel which favors the permeation of cations, amino acids, iron Fe(3+) and less efficiently phosphate. Does not transport Fe-ExoMS, the predominant siderophore. Plays a role in transport of beta-lactamase and hydrophilic fluoroquinolone antibiotics such as norfloxacin as well as chloramphenicol. There are about 2400 porins in wild-type, 800 in an mspA deletion and 150 in a double mspA-mspC deletion. Different conductance values with maxima at 2.3 and 4.6 nanosiemens might be caused by a simultaneous reconstitution of MspA channels into the membrane or by the existence of different MspA conformations. The polypeptide is Porin MspA (mspA) (Mycolicibacterium smegmatis (strain ATCC 700084 / mc(2)155) (Mycobacterium smegmatis)).